The chain runs to 234 residues: (5-formylfuran-3-yl)methyl phosphate synthase (234 aa).

Lysine 27 (schiff-base intermediate with substrate) is an active-site residue. The active-site Proton acceptor is the lysine 85.

This sequence belongs to the MfnB family.

It catalyses the reaction 2 D-glyceraldehyde 3-phosphate = 4-(hydroxymethyl)-2-furancarboxaldehyde phosphate + phosphate + 2 H2O. Its pathway is cofactor biosynthesis; methanofuran biosynthesis. Catalyzes the formation of 4-(hydroxymethyl)-2-furancarboxaldehyde phosphate (4-HFC-P) from two molecules of glyceraldehyde-3-P (GA-3-P). The protein is (5-formylfuran-3-yl)methyl phosphate synthase of Methanosarcina acetivorans (strain ATCC 35395 / DSM 2834 / JCM 12185 / C2A).